The following is a 411-amino-acid chain: Zinc metalloproteinase/disintegrin (411 aa).

The signal sequence occupies residues 1–20 (MIEVLLVTICLAVFPYQGSS). Positions 21–190 (IILESGNVND…KASQLYLTPE (170 aa)) are excised as a propeptide. In terms of domain architecture, Peptidase M12B spans 197 to 395 (RYVKLAIVVD…SKPQCILNAP (199 aa)). Aspartate 284 is a binding site for Ca(2+). Intrachain disulfides connect cysteine 308/cysteine 390, cysteine 352/cysteine 374, and cysteine 354/cysteine 357. Residue histidine 333 coordinates Zn(2+). Residue glutamate 334 is part of the active site. Residues histidine 337 and histidine 343 each coordinate Zn(2+). Residues cysteine 390 and asparagine 393 each contribute to the Ca(2+) site. The propeptide occupies 396–411 (LRTDTVSTPVSGNEPL).

This sequence belongs to the venom metalloproteinase (M12B) family. P-II subfamily. In terms of assembly, monomer. Requires Zn(2+) as cofactor. Expressed by the venom gland.

The protein resides in the secreted. Snake venom metalloproteinase that impairs hemostasis in the envenomed animal. This chain is Zinc metalloproteinase/disintegrin, found in Protobothrops mucrosquamatus (Taiwan habu).